We begin with the raw amino-acid sequence, 103 residues long: Large ribosomal subunit protein bL21 (103 aa).

Belongs to the bacterial ribosomal protein bL21 family. As to quaternary structure, part of the 50S ribosomal subunit. Contacts protein L20.

Functionally, this protein binds to 23S rRNA in the presence of protein L20. This is Large ribosomal subunit protein bL21 from Alkaliphilus oremlandii (strain OhILAs) (Clostridium oremlandii (strain OhILAs)).